A 740-amino-acid polypeptide reads, in one-letter code: Ethylene receptor 1 (740 aa).

3 helical membrane passes run 23–43 (ISDF…IYFV), 53–73 (WVLV…LINL), and 92–112 (VLTA…IPDL). Residues C65 and H69 each coordinate Cu cation. The GAF domain occupies 158–307 (DRHTILKTTL…VVADQVAVAL (150 aa)). The Histidine kinase domain maps to 350 to 588 (VMNHEMRTPM…TFIVKLGIAE (239 aa)). H353 bears the Phosphohistidine; by autocatalysis mark. The Response regulatory domain occupies 614–731 (KVLVMDDNGV…KMRSVLSELI (118 aa)). D662 bears the 4-aspartylphosphate mark.

It belongs to the ethylene receptor family. In terms of assembly, homodimer; disulfide-linked. Cu cation is required as a cofactor. Activation probably requires a transfer of a phosphate group between a His in the transmitter domain and an Asp of the receiver domain.

Its subcellular location is the endoplasmic reticulum membrane. It carries out the reaction ATP + protein L-histidine = ADP + protein N-phospho-L-histidine.. In terms of biological role, may act early in the ethylene signal transduction pathway, possibly as an ethylene receptor, or as a regulator of the pathway. This chain is Ethylene receptor 1 (ETR1), found in Cucumis sativus (Cucumber).